A 354-amino-acid polypeptide reads, in one-letter code: Replication factor C subunit 5 (354 aa).

40–47 serves as a coordination point for ATP; sequence YGPSGSGK.

This sequence belongs to the activator 1 small subunits family. As to quaternary structure, heterotetramer of subunits RFC2, RFC3, RFC4 and RFC5 that can form a complex with RFC1. In terms of tissue distribution, expressed in roots, leaves, shoot apical meristem (SAM), flag leaves and panicles.

The protein localises to the nucleus. May be involved in DNA replication and thus regulate cell proliferation. The sequence is that of Replication factor C subunit 5 (RFC5) from Oryza sativa subsp. japonica (Rice).